Reading from the N-terminus, the 275-residue chain is Ribosomal RNA small subunit methyltransferase A (275 aa).

S-adenosyl-L-methionine-binding residues include Asn19, Leu21, Gly46, Glu71, Asp94, and Asn117.

Belongs to the class I-like SAM-binding methyltransferase superfamily. rRNA adenine N(6)-methyltransferase family. RsmA subfamily.

Its subcellular location is the cytoplasm. The enzyme catalyses adenosine(1518)/adenosine(1519) in 16S rRNA + 4 S-adenosyl-L-methionine = N(6)-dimethyladenosine(1518)/N(6)-dimethyladenosine(1519) in 16S rRNA + 4 S-adenosyl-L-homocysteine + 4 H(+). Functionally, specifically dimethylates two adjacent adenosines (A1518 and A1519) in the loop of a conserved hairpin near the 3'-end of 16S rRNA in the 30S particle. May play a critical role in biogenesis of 30S subunits. The sequence is that of Ribosomal RNA small subunit methyltransferase A from Burkholderia mallei (strain NCTC 10247).